The following is a 277-amino-acid chain: Phosphonates import ATP-binding protein PhnC (277 aa).

The region spanning 3 to 251 (IKLDKVSARH…RLQALYAQHL (249 aa)) is the ABC transporter domain. 40–47 (GPSGAGKT) is an ATP binding site.

The protein belongs to the ABC transporter superfamily. Phosphonates importer (TC 3.A.1.9.1) family. In terms of assembly, the complex is composed of two ATP-binding proteins (PhnC), two transmembrane proteins (PhnE) and a solute-binding protein (PhnD).

The protein resides in the cell inner membrane. It catalyses the reaction phosphonate(out) + ATP + H2O = phosphonate(in) + ADP + phosphate + H(+). Part of the ABC transporter complex PhnCDE involved in phosphonates import. Responsible for energy coupling to the transport system. This chain is Phosphonates import ATP-binding protein PhnC, found in Polaromonas sp. (strain JS666 / ATCC BAA-500).